We begin with the raw amino-acid sequence, 871 residues long: Translation initiation factor IF-2 (871 aa).

Disordered stretches follow at residues 60-101 (KKNI…QEVK) and 184-203 (ESLK…KKES). Basic residues predominate over residues 61–72 (KNIKTPTAKKPK). The segment covering 73 to 101 (KENIKEQEKLNESEKKEPKKEEKLKQEVK) has biased composition (basic and acidic residues). The tr-type G domain maps to 370 to 537 (TRAPVITIMG…IVLLQADILE (168 aa)). The G1 stretch occupies residues 379-386 (GHVDHGKT). Position 379–386 (379–386 (GHVDHGKT)) interacts with GTP. The segment at 404–408 (GITQH) is G2. Residues 425 to 428 (DTPG) form a G3 region. Residues 425–429 (DTPGH) and 479–482 (NKMD) each bind GTP. Residues 479–482 (NKMD) are G4. The tract at residues 515–517 (SAK) is G5.

Belongs to the TRAFAC class translation factor GTPase superfamily. Classic translation factor GTPase family. IF-2 subfamily.

The protein localises to the cytoplasm. Functionally, one of the essential components for the initiation of protein synthesis. Protects formylmethionyl-tRNA from spontaneous hydrolysis and promotes its binding to the 30S ribosomal subunits. Also involved in the hydrolysis of GTP during the formation of the 70S ribosomal complex. This Campylobacter jejuni subsp. jejuni serotype O:6 (strain 81116 / NCTC 11828) protein is Translation initiation factor IF-2.